The sequence spans 176 residues: MTNIRKSHPLLKIINNSFIDLPAPSNISSWWNFGSLLGICLALQILTGIFLAMHYTSDTATAFNSVTHICRDVNYGWVLRYLHANGASMFFICLYLHVGRGLYYGSYMYKETWNMGVILLFAVMATAFMGYVLPWGQMSFWGATVITNLLSAIPYIGTDLVEWIWGGFSVDKATLT.

A run of 3 helical transmembrane segments spans residues 33–53, 77–98, and 113–133; these read FGSL…FLAM, WVLR…YLHV, and WNMG…GYVL. Heme b is bound by residues H83 and H97.

It belongs to the cytochrome b family. In terms of assembly, the cytochrome bc1 complex contains 11 subunits: 3 respiratory subunits (MT-CYB, CYC1 and UQCRFS1), 2 core proteins (UQCRC1 and UQCRC2) and 6 low-molecular weight proteins (UQCRH/QCR6, UQCRB/QCR7, UQCRQ/QCR8, UQCR10/QCR9, UQCR11/QCR10 and a cleavage product of UQCRFS1). This cytochrome bc1 complex then forms a dimer. Requires heme b as cofactor.

The protein resides in the mitochondrion inner membrane. In terms of biological role, component of the ubiquinol-cytochrome c reductase complex (complex III or cytochrome b-c1 complex) that is part of the mitochondrial respiratory chain. The b-c1 complex mediates electron transfer from ubiquinol to cytochrome c. Contributes to the generation of a proton gradient across the mitochondrial membrane that is then used for ATP synthesis. This is Cytochrome b (MT-CYB) from Lasionycteris noctivagans (Silver-haired bat).